Consider the following 454-residue polypeptide: CBL-interacting protein kinase 33 (454 aa).

The Protein kinase domain maps to Tyr13–Phe268. ATP contacts are provided by residues Ile19–Val27 and Lys42. Asp136 functions as the Proton acceptor in the catalytic mechanism. The activation loop stretch occupies residues Asp154 to Glu183. The NAF domain maps to Glu305–Asp329. The segment at Lys335–Val364 is PPI.

It belongs to the protein kinase superfamily. CAMK Ser/Thr protein kinase family. SNF1 subfamily. It depends on Mn(2+) as a cofactor.

The catalysed reaction is L-seryl-[protein] + ATP = O-phospho-L-seryl-[protein] + ADP + H(+). It carries out the reaction L-threonyl-[protein] + ATP = O-phospho-L-threonyl-[protein] + ADP + H(+). CIPK serine-threonine protein kinases interact with CBL proteins. Binding of a CBL protein to the regulatory NAF domain of CIPK protein lead to the activation of the kinase in a calcium-dependent manner. The protein is CBL-interacting protein kinase 33 (CIPK33) of Oryza sativa subsp. japonica (Rice).